We begin with the raw amino-acid sequence, 524 residues long: Nucleoporin NUP56 (524 aa).

The interval 1–219 (MADDPHNTST…SSMAKFASST (219 aa)) is disordered. Basic and acidic residues-rich tracts occupy residues 28 to 80 (VKED…EPEK), 114 to 168 (THDE…KEVE), and 179 to 199 (SAEK…KVDK). The Nuclear localization signal motif lies at 37 to 44 (ARRELKQT). The stretch at 111-133 (KKRTHDELEQDGKEEEEKKEGEK) forms a coiled coil. Positions 200–219 (PQTSSSAFANSSMAKFASST) are enriched in polar residues. FG repeat units follow at residues 223 to 224 (FG), 226 to 227 (FG), 237 to 238 (FG), 247 to 248 (FG), 266 to 267 (FG), 312 to 313 (FG), and 328 to 329 (FG). Disordered regions lie at residues 247–284 (FGSK…QAGG) and 300–371 (GSSA…GEEK). Low complexity predominate over residues 248–277 (GSKSADASAAPAGPPKLSFGSASAASPFAS). 2 stretches are compositionally biased toward acidic residues: residues 332–345 (ESDE…EEGE) and 352–362 (GEGEEKEEEEK). Residues 345–376 (EENKSENGEGEEKEEEEKEEKASGEEKKKFKL) adopt a coiled-coil conformation. The RanBD1 domain maps to 377-475 (QKVHIDDGEG…TPILPAMKFQ (99 aa)). Residues 503–524 (SQANATQFSNMVEKIKEKLAAA) adopt a coiled-coil conformation.

As to quaternary structure, the nuclear pore complex (NPC) constitutes the exclusive means of nucleocytoplasmic transport. NPCs allow the passive diffusion of ions and small molecules and the active, nuclear transport receptor-mediated bidirectional transport of macromolecules such as proteins, RNAs, ribonucleoparticles (RNPs), and ribosomal subunits across the nuclear envelope. The 55-60 MDa NPC is composed of at least 28 different subunits: AMO1, ELYS, GLE1, GLE2, MLP1, NDC1, NIC96, NSP1, NUP133, NUP145, NUP152, NUP159, NUP170, NUP188, NUP192, NUP37, NUP49, NUP53, NUP56, NUP57, NUP82, NUP84, NUP85, POM152, POM33, POM34, SEC13 and SEH1. Due to its 8-fold rotational symmetry, all subunits are present with 8 copies or multiples thereof.

The protein localises to the nucleus. It localises to the nuclear pore complex. The protein resides in the nucleus membrane. In terms of biological role, functions as a component of the nuclear pore complex (NPC). NPC components, collectively referred to as nucleoporins (NUPs), can play the role of both NPC structural components and of docking or interaction partners for transiently associated nuclear transport factors. Active directional transport is assured by both, a Phe-Gly (FG) repeat affinity gradient for these transport factors across the NPC and a transport cofactor concentration gradient across the nuclear envelope (GSP1 and GSP2 GTPases associated predominantly with GTP in the nucleus, with GDP in the cytoplasm). This is Nucleoporin NUP56 (NUP56) from Chaetomium thermophilum (strain DSM 1495 / CBS 144.50 / IMI 039719) (Thermochaetoides thermophila).